Reading from the N-terminus, the 433-residue chain is Zinc finger protein CONSTANS-LIKE 15 (433 aa).

Residues Cys-9, Cys-12, Cys-32, His-37, Cys-52, Cys-55, Cys-75, and His-80 each coordinate Zn(2+). The B box-type 1; atypical zinc finger occupies 9–51; that stretch reads CDFCGERTAVLFCRADTAKLCLPCDQQVHTANLLSRKHVRSQI. The B box-type 2; atypical zinc finger occupies 52–94; that stretch reads CDNCGNEPVSVRCFTDNLILCQECDWDVHGSCSVSDAHVRSAV. The segment at 319–353 is disordered; the sequence is DDYKRSTSGQVQPTKSESNNRPITFGSEKGSNSSS. Polar residues predominate over residues 324-340; that stretch reads STSGQVQPTKSESNNRP. Residues 374 to 398 adopt a coiled-coil conformation; sequence TKADLERLAQNRGDAMQRYKEKRKT. The CCT domain occupies 385–427; that stretch reads RGDAMQRYKEKRKTRRYDKTIRYESRKARADTRLRVRGRFVKA.

This sequence belongs to the CONSTANS family.

It localises to the nucleus. The protein is Zinc finger protein CONSTANS-LIKE 15 (COL15) of Arabidopsis thaliana (Mouse-ear cress).